The primary structure comprises 372 residues: tRNA-specific 2-thiouridylase MnmA (372 aa).

Residues 13–20 and M39 contribute to the ATP site; that span reads GMSGGVDS. The interval 99 to 101 is interaction with target base in tRNA; sequence NPD. The active-site Nucleophile is C104. Residues C104 and C200 are joined by a disulfide bond. G128 is an ATP binding site. The interval 150 to 152 is interaction with tRNA; the sequence is KDQ. The active-site Cysteine persulfide intermediate is the C200. Positions 310-311 are interaction with tRNA; sequence RY.

The protein belongs to the MnmA/TRMU family.

It localises to the cytoplasm. The catalysed reaction is S-sulfanyl-L-cysteinyl-[protein] + uridine(34) in tRNA + AH2 + ATP = 2-thiouridine(34) in tRNA + L-cysteinyl-[protein] + A + AMP + diphosphate + H(+). Its function is as follows. Catalyzes the 2-thiolation of uridine at the wobble position (U34) of tRNA, leading to the formation of s(2)U34. The chain is tRNA-specific 2-thiouridylase MnmA from Bacillus licheniformis (strain ATCC 14580 / DSM 13 / JCM 2505 / CCUG 7422 / NBRC 12200 / NCIMB 9375 / NCTC 10341 / NRRL NRS-1264 / Gibson 46).